Consider the following 258-residue polypeptide: Indole-3-glycerol phosphate synthase (258 aa).

The protein belongs to the TrpC family.

It catalyses the reaction 1-(2-carboxyphenylamino)-1-deoxy-D-ribulose 5-phosphate + H(+) = (1S,2R)-1-C-(indol-3-yl)glycerol 3-phosphate + CO2 + H2O. Its pathway is amino-acid biosynthesis; L-tryptophan biosynthesis; L-tryptophan from chorismate: step 4/5. This chain is Indole-3-glycerol phosphate synthase, found in Campylobacter jejuni subsp. jejuni serotype O:23/36 (strain 81-176).